We begin with the raw amino-acid sequence, 143 residues long: Large ribosomal subunit protein uL11 (143 aa).

The protein belongs to the universal ribosomal protein uL11 family. In terms of assembly, part of the ribosomal stalk of the 50S ribosomal subunit. Interacts with L10 and the large rRNA to form the base of the stalk. L10 forms an elongated spine to which L12 dimers bind in a sequential fashion forming a multimeric L10(L12)X complex. In terms of processing, one or more lysine residues are methylated.

Functionally, forms part of the ribosomal stalk which helps the ribosome interact with GTP-bound translation factors. The protein is Large ribosomal subunit protein uL11 of Erythrobacter litoralis (strain HTCC2594).